Here is a 285-residue protein sequence, read N- to C-terminus: Probable endonuclease 4 (285 aa).

Zn(2+) contacts are provided by histidine 69, histidine 109, glutamate 145, aspartate 179, histidine 182, histidine 216, aspartate 229, histidine 231, and glutamate 261.

This sequence belongs to the AP endonuclease 2 family. Zn(2+) is required as a cofactor.

It carries out the reaction Endonucleolytic cleavage to 5'-phosphooligonucleotide end-products.. Endonuclease IV plays a role in DNA repair. It cleaves phosphodiester bonds at apurinic or apyrimidinic (AP) sites, generating a 3'-hydroxyl group and a 5'-terminal sugar phosphate. In Citrobacter koseri (strain ATCC BAA-895 / CDC 4225-83 / SGSC4696), this protein is Probable endonuclease 4.